Here is a 507-residue protein sequence, read N- to C-terminus: MDIRFQAGGHAAWRAGAVMVFVFKDEPLAEVDSQLVEAAPWLTIAPAGNDFRAAKDEVAVLHGPPAFDIPRVVAVGLGKREDCTLERIRLAAAAGIRRCRDLRVENVGVVAAQLGRMAPTEHDALRVAEEVVCGALLGLYRYDRFRTVKDDERAEDPRWLALLCEGKNVPDDLHGAARKGEAVALGMGVARDLVNGPANIVTPAFLASEAEALGRKHGFRVEVLGRDELSSMGMGAFASVFRGAEEEARLIVIEHAPAGTEEQQPLVFVGKGVTFDTGGISLKPAAKMHEMKGDMAGAAAILGLFAALGERDLPRRVVGVLPCTENMPDGRATRPGDVVTTLSGKTVEILNTDAEGRLLLCDALTYAQRRWQPEALVDLATLTGACVVALGTEVAGLFCDDAALADAIASRGETVGDLFWPLPLWKSYAENLKSDVADLANVGPREGGAVNAALFLRQFIDDGVRWAHLDIAGPAFTAKKSALCPGGGTGFAVRTLFELVSEGIPAA.

Mn(2+)-binding residues include Lys-271 and Asp-276. Lys-283 is an active-site residue. Asp-294, Asp-353, and Glu-355 together coordinate Mn(2+). The active site involves Arg-357.

It belongs to the peptidase M17 family. Mn(2+) is required as a cofactor.

The protein localises to the cytoplasm. The enzyme catalyses Release of an N-terminal amino acid, Xaa-|-Yaa-, in which Xaa is preferably Leu, but may be other amino acids including Pro although not Arg or Lys, and Yaa may be Pro. Amino acid amides and methyl esters are also readily hydrolyzed, but rates on arylamides are exceedingly low.. The catalysed reaction is Release of an N-terminal amino acid, preferentially leucine, but not glutamic or aspartic acids.. Its function is as follows. Presumably involved in the processing and regular turnover of intracellular proteins. Catalyzes the removal of unsubstituted N-terminal amino acids from various peptides. In Nitratidesulfovibrio vulgaris (strain ATCC 29579 / DSM 644 / CCUG 34227 / NCIMB 8303 / VKM B-1760 / Hildenborough) (Desulfovibrio vulgaris), this protein is Probable cytosol aminopeptidase.